The sequence spans 216 residues: Probable nicotinate-nucleotide adenylyltransferase (216 aa).

Belongs to the NadD family.

It carries out the reaction nicotinate beta-D-ribonucleotide + ATP + H(+) = deamido-NAD(+) + diphosphate. It functions in the pathway cofactor biosynthesis; NAD(+) biosynthesis; deamido-NAD(+) from nicotinate D-ribonucleotide: step 1/1. Its function is as follows. Catalyzes the reversible adenylation of nicotinate mononucleotide (NaMN) to nicotinic acid adenine dinucleotide (NaAD). This is Probable nicotinate-nucleotide adenylyltransferase from Klebsiella pneumoniae subsp. pneumoniae (strain ATCC 700721 / MGH 78578).